A 197-amino-acid chain; its full sequence is Thymidylate kinase (197 aa).

7 to 14 (GIDGSGKS) provides a ligand contact to ATP.

The protein belongs to the thymidylate kinase family.

It carries out the reaction dTMP + ATP = dTDP + ADP. Its function is as follows. Phosphorylation of dTMP to form dTDP in both de novo and salvage pathways of dTTP synthesis. In Thermotoga maritima (strain ATCC 43589 / DSM 3109 / JCM 10099 / NBRC 100826 / MSB8), this protein is Thymidylate kinase (tmk).